The chain runs to 247 residues: Geranylgeranylglyceryl phosphate synthase (247 aa).

Residues Asp-24 and Ser-53 each contribute to the Mg(2+) site. Residues 172–178 (YLEAGSG), 203–204 (GG), and 225–226 (GT) contribute to the sn-glycerol 1-phosphate site.

Belongs to the GGGP/HepGP synthase family. Group II subfamily. It depends on Mg(2+) as a cofactor.

The protein resides in the cytoplasm. It carries out the reaction sn-glycerol 1-phosphate + (2E,6E,10E)-geranylgeranyl diphosphate = sn-3-O-(geranylgeranyl)glycerol 1-phosphate + diphosphate. It participates in membrane lipid metabolism; glycerophospholipid metabolism. In terms of biological role, prenyltransferase that catalyzes the transfer of the geranylgeranyl moiety of geranylgeranyl diphosphate (GGPP) to the C3 hydroxyl of sn-glycerol-1-phosphate (G1P). This reaction is the first ether-bond-formation step in the biosynthesis of archaeal membrane lipids. The chain is Geranylgeranylglyceryl phosphate synthase from Cenarchaeum symbiosum (strain A).